A 325-amino-acid chain; its full sequence is 33 kDa chaperonin (325 aa).

Cystine bridges form between Cys260–Cys262 and Cys293–Cys296.

It belongs to the HSP33 family. Post-translationally, under oxidizing conditions two disulfide bonds are formed involving the reactive cysteines. Under reducing conditions zinc is bound to the reactive cysteines and the protein is inactive.

It is found in the cytoplasm. Its function is as follows. Redox regulated molecular chaperone. Protects both thermally unfolding and oxidatively damaged proteins from irreversible aggregation. Plays an important role in the bacterial defense system toward oxidative stress. The polypeptide is 33 kDa chaperonin (Aquifex aeolicus (strain VF5)).